Consider the following 326-residue polypeptide: uncharacterized protein (326 aa).

28-35 (GPINSGKT) contributes to the ATP binding site.

It belongs to the archaeal ATPase family.

This is an uncharacterized protein from Pyrococcus abyssi (strain GE5 / Orsay).